A 178-amino-acid chain; its full sequence is uncharacterized protein (178 aa).

5 consecutive transmembrane segments (helical) span residues glycine 13 to proline 33, methionine 48 to isoleucine 68, isoleucine 80 to isoleucine 100, isoleucine 115 to leucine 135, and tryptophan 155 to serine 175.

The protein resides in the cell membrane. This is an uncharacterized protein from Bacillus subtilis (strain 168).